We begin with the raw amino-acid sequence, 234 residues long: tRNA (guanine-N(1)-)-methyltransferase (234 aa).

S-adenosyl-L-methionine is bound by residues G115 and 135–140; that span reads VGDYIL.

This sequence belongs to the RNA methyltransferase TrmD family. Homodimer.

It localises to the cytoplasm. It catalyses the reaction guanosine(37) in tRNA + S-adenosyl-L-methionine = N(1)-methylguanosine(37) in tRNA + S-adenosyl-L-homocysteine + H(+). Functionally, specifically methylates guanosine-37 in various tRNAs. The sequence is that of tRNA (guanine-N(1)-)-methyltransferase from Rickettsia rickettsii (strain Iowa).